The following is a 301-amino-acid chain: Sulfate adenylyltransferase subunit 2 (301 aa).

This sequence belongs to the PAPS reductase family. CysD subfamily. In terms of assembly, heterodimer composed of CysD, the smaller subunit, and CysN.

It carries out the reaction sulfate + ATP + H(+) = adenosine 5'-phosphosulfate + diphosphate. It functions in the pathway sulfur metabolism; hydrogen sulfide biosynthesis; sulfite from sulfate: step 1/3. With CysN forms the ATP sulfurylase (ATPS) that catalyzes the adenylation of sulfate producing adenosine 5'-phosphosulfate (APS) and diphosphate, the first enzymatic step in sulfur assimilation pathway. APS synthesis involves the formation of a high-energy phosphoric-sulfuric acid anhydride bond driven by GTP hydrolysis by CysN coupled to ATP hydrolysis by CysD. In Shewanella woodyi (strain ATCC 51908 / MS32), this protein is Sulfate adenylyltransferase subunit 2.